Reading from the N-terminus, the 119-residue chain is Beta-2-microglobulin (119 aa).

An N-terminal signal peptide occupies residues M1–A20. The Ig-like C1-type domain maps to P25–K114. Cysteines 45 and 100 form a disulfide.

It belongs to the beta-2-microglobulin family. In terms of assembly, heterodimer of an alpha chain and a beta chain. Beta-2-microglobulin is the beta-chain of major histocompatibility complex class I molecules.

Its subcellular location is the secreted. Component of the class I major histocompatibility complex (MHC). Involved in the presentation of peptide antigens to the immune system. The polypeptide is Beta-2-microglobulin (B2M) (Cheracebus torquatus (Collared titi monkey)).